We begin with the raw amino-acid sequence, 300 residues long: 4-hydroxy-tetrahydrodipicolinate synthase (300 aa).

Threonine 45 serves as a coordination point for pyruvate. The Proton donor/acceptor role is filled by tyrosine 140. The active-site Schiff-base intermediate with substrate is lysine 169. Valine 210 contacts pyruvate.

Belongs to the DapA family. Homotetramer; dimer of dimers.

The protein localises to the cytoplasm. It catalyses the reaction L-aspartate 4-semialdehyde + pyruvate = (2S,4S)-4-hydroxy-2,3,4,5-tetrahydrodipicolinate + H2O + H(+). The protein operates within amino-acid biosynthesis; L-lysine biosynthesis via DAP pathway; (S)-tetrahydrodipicolinate from L-aspartate: step 3/4. In terms of biological role, catalyzes the condensation of (S)-aspartate-beta-semialdehyde [(S)-ASA] and pyruvate to 4-hydroxy-tetrahydrodipicolinate (HTPA). This is 4-hydroxy-tetrahydrodipicolinate synthase from Helicobacter acinonychis (strain Sheeba).